A 282-amino-acid polypeptide reads, in one-letter code: Acetyl-coenzyme A carboxylase carboxyl transferase subunit beta (282 aa).

In terms of domain architecture, CoA carboxyltransferase N-terminal spans 25–282 (VWRKCPHCNE…SQMLRIFMKQ (258 aa)). Residues C29, C32, C48, and C51 each contribute to the Zn(2+) site. The segment at 29–51 (CPHCNEIIYAKEIERNLNVCPKC) adopts a C4-type zinc-finger fold.

This sequence belongs to the AccD/PCCB family. Acetyl-CoA carboxylase is a heterohexamer composed of biotin carboxyl carrier protein (AccB), biotin carboxylase (AccC) and two subunits each of ACCase subunit alpha (AccA) and ACCase subunit beta (AccD). Zn(2+) is required as a cofactor.

Its subcellular location is the cytoplasm. It catalyses the reaction N(6)-carboxybiotinyl-L-lysyl-[protein] + acetyl-CoA = N(6)-biotinyl-L-lysyl-[protein] + malonyl-CoA. It participates in lipid metabolism; malonyl-CoA biosynthesis; malonyl-CoA from acetyl-CoA: step 1/1. Its function is as follows. Component of the acetyl coenzyme A carboxylase (ACC) complex. Biotin carboxylase (BC) catalyzes the carboxylation of biotin on its carrier protein (BCCP) and then the CO(2) group is transferred by the transcarboxylase to acetyl-CoA to form malonyl-CoA. The polypeptide is Acetyl-coenzyme A carboxylase carboxyl transferase subunit beta (Syntrophotalea carbinolica (strain DSM 2380 / NBRC 103641 / GraBd1) (Pelobacter carbinolicus)).